The sequence spans 234 residues: Leucyl/phenylalanyl-tRNA--protein transferase (234 aa).

It belongs to the L/F-transferase family.

Its subcellular location is the cytoplasm. It catalyses the reaction N-terminal L-lysyl-[protein] + L-leucyl-tRNA(Leu) = N-terminal L-leucyl-L-lysyl-[protein] + tRNA(Leu) + H(+). The enzyme catalyses N-terminal L-arginyl-[protein] + L-leucyl-tRNA(Leu) = N-terminal L-leucyl-L-arginyl-[protein] + tRNA(Leu) + H(+). The catalysed reaction is L-phenylalanyl-tRNA(Phe) + an N-terminal L-alpha-aminoacyl-[protein] = an N-terminal L-phenylalanyl-L-alpha-aminoacyl-[protein] + tRNA(Phe). Its function is as follows. Functions in the N-end rule pathway of protein degradation where it conjugates Leu, Phe and, less efficiently, Met from aminoacyl-tRNAs to the N-termini of proteins containing an N-terminal arginine or lysine. The sequence is that of Leucyl/phenylalanyl-tRNA--protein transferase from Salmonella gallinarum (strain 287/91 / NCTC 13346).